The primary structure comprises 209 residues: Small ribosomal subunit protein uS4 (209 aa).

The region spanning 98–159 (RRLDSAVYRL…KSRKITRIND (62 aa)) is the S4 RNA-binding domain.

Belongs to the universal ribosomal protein uS4 family. Part of the 30S ribosomal subunit. Contacts protein S5. The interaction surface between S4 and S5 is involved in control of translational fidelity.

Its function is as follows. One of the primary rRNA binding proteins, it binds directly to 16S rRNA where it nucleates assembly of the body of the 30S subunit. With S5 and S12 plays an important role in translational accuracy. This chain is Small ribosomal subunit protein uS4, found in Syntrophotalea carbinolica (strain DSM 2380 / NBRC 103641 / GraBd1) (Pelobacter carbinolicus).